The sequence spans 331 residues: Malate dehydrogenase (331 aa).

NAD(+) is bound at residue 14-20; sequence GAAGSIG. The substrate site is built by Arg95 and Arg101. NAD(+)-binding positions include Asn108, Gln115, and 132–134; that span reads VGN. Asn134 and Arg165 together coordinate substrate. The active-site Proton acceptor is His190.

It belongs to the LDH/MDH superfamily. MDH type 2 family.

The catalysed reaction is (S)-malate + NAD(+) = oxaloacetate + NADH + H(+). Its function is as follows. Catalyzes the reversible oxidation of malate to oxaloacetate. In Rhodococcus jostii (strain RHA1), this protein is Malate dehydrogenase.